The chain runs to 248 residues: Flagellar L-ring protein (248 aa).

A signal peptide spans 1–23; it reads MRHAFRHSVRTLGLLGLLPVLSA. C24 is lipidated: N-palmitoyl cysteine. Residue C24 is the site of S-diacylglycerol cysteine attachment.

This sequence belongs to the FlgH family. The basal body constitutes a major portion of the flagellar organelle and consists of four rings (L,P,S, and M) mounted on a central rod.

It localises to the cell outer membrane. The protein resides in the bacterial flagellum basal body. Its function is as follows. Assembles around the rod to form the L-ring and probably protects the motor/basal body from shearing forces during rotation. The chain is Flagellar L-ring protein from Gluconobacter oxydans (strain 621H) (Gluconobacter suboxydans).